The following is a 274-amino-acid chain: Proteasome subunit beta type-7-B (274 aa).

Residues 1-37 constitute a propeptide, removed in mature form; that stretch reads MSQSSVDIPPKGGFSFDLCKRNDMLTQKGLKAPSFLK. Catalysis depends on threonine 40, which acts as the Nucleophile.

Belongs to the peptidase T1B family. As to quaternary structure, component of the 20S core complex of the 26S proteasome. The 26S proteasome is composed of a core protease (CP), known as the 20S proteasome, capped at one or both ends by the 19S regulatory particle (RP/PA700). The 20S proteasome core is composed of 28 subunits that are arranged in four stacked rings, resulting in a barrel-shaped structure. The two end rings are each formed by seven alpha subunits, and the two central rings are each formed by seven beta subunits. The catalytic chamber with the active sites is on the inside of the barrel.

It localises to the cytoplasm. The protein localises to the nucleus. The enzyme catalyses Cleavage of peptide bonds with very broad specificity.. In terms of biological role, the proteasome is a multicatalytic proteinase complex which is characterized by its ability to cleave peptides with Arg, Phe, Tyr, Leu, and Glu adjacent to the leaving group at neutral or slightly basic pH. The proteasome has an ATP-dependent proteolytic activity. The protein is Proteasome subunit beta type-7-B (PBB2) of Arabidopsis thaliana (Mouse-ear cress).